The following is a 477-amino-acid chain: Enolase 1, chloroplastic (477 aa).

The transit peptide at 1–41 (MALTTKPHHLQRSFLSPSRVSGERYLESAPSCLRFRRSGVQ) directs the protein to the chloroplast. Substrate contacts are provided by histidine 203 and glutamate 212. Glutamate 255 acts as the Proton donor in catalysis. Mg(2+) is bound by residues aspartate 290, glutamate 340, and aspartate 365. Glutamate 340 and aspartate 365 together coordinate substrate. The active-site Proton acceptor is the lysine 390. Substrate contacts are provided by residues 417–420 (SHRS) and lysine 441. Serine 476 carries the phosphoserine modification.

This sequence belongs to the enolase family. Requires Mg(2+) as cofactor. As to expression, highly expressed in young roots, young siliques, and shoot apex. Lowly expressed in young leaves, stems and cotyledons.

Its subcellular location is the plastid. The protein localises to the chloroplast. It catalyses the reaction (2R)-2-phosphoglycerate = phosphoenolpyruvate + H2O. Its pathway is carbohydrate degradation; glycolysis; pyruvate from D-glyceraldehyde 3-phosphate: step 4/5. The protein is Enolase 1, chloroplastic (ENO1) of Arabidopsis thaliana (Mouse-ear cress).